The following is a 495-amino-acid chain: MAMSLQGSRRASAGSRRRTSPPVSVRDAYGTSSLSSSSNSGSCKGSDSSPTPRRSMKYTLCSDNHGIKPPTPEQYLTPLQQKEVCIRHLKARLKDTQDRLQDRDTEIDDLKTQLSRMQEDWIEEECHRVEAQLALKEARKEIRQLKQVIDTVKNNLIDKDKGLQKYFVDINIQNKKLETLLHSMEVAQNGVAKEEGTGESAGGSPARSLTRSSTYTKLSDPAVCGDRQPGDPSNTSAEDGADSGYVAADDTLSRTDALEASSLLSSGVDCGLEEASLHSSFNLGPRFPASNTYEKLLCGMEAGVQVSCMQERAIQTDFVQYQPDLNTILEKVGQAQVCGSVLKDRHSELDPHPSGPRDPDSAVVVTVGDELEAPEPITCGPATHRPAVNSNPGLPVSVVCPVEEEEEEAAAATTTEKEPKSYWSRHYIVDLLAVVVPAVPTVAWLCRSQRRQGQPIYNISSLLRGCCTVALHSIRRISCRSLGQPSSSTAGGSQL.

The disordered stretch occupies residues 1 to 74 (MAMSLQGSRR…HGIKPPTPEQ (74 aa)). Residues 7–49 (GSRRASAGSRRRTSPPVSVRDAYGTSSLSSSSNSGSCKGSDSS) show a composition bias toward low complexity. A coiled-coil region spans residues 79-161 (LQQKEVCIRH…VKNNLIDKDK (83 aa)). Residues 191-244 (VAKEEGTGESAGGSPARSLTRSSTYTKLSDPAVCGDRQPGDPSNTSAEDGADSG) form a disordered region. A phosphoserine mark is found at serine 200 and serine 204. Residues 207–217 (RSLTRSSTYTK) are compositionally biased toward polar residues. Residue threonine 214 is modified to Phosphothreonine. Serine 219 is modified (phosphoserine). Threonine 235 is modified (phosphothreonine). A helical membrane pass occupies residues 427 to 446 (YIVDLLAVVVPAVPTVAWLC).

In terms of assembly, binds to STX1A. Interacts with DNM1; this interaction inhibits the binding of DNM1 to AMPH and DNM1-receptor-mediated endocytosis.

The protein resides in the membrane. Its subcellular location is the synapse. The protein localises to the synaptosome. Functionally, inhibits SNARE complex formation by absorbing free STX1A. The chain is Syntaphilin from Mus musculus (Mouse).